We begin with the raw amino-acid sequence, 500 residues long: Cytochrome P450 71B9 (500 aa).

A helical transmembrane segment spans residues 1-21 (MATIWFLSLLFLCCILLAAFK). Cys-440 lines the heme pocket.

Belongs to the cytochrome P450 family. Heme is required as a cofactor.

It is found in the membrane. In Arabidopsis thaliana (Mouse-ear cress), this protein is Cytochrome P450 71B9 (CYP71B9).